We begin with the raw amino-acid sequence, 262 residues long: Thioredoxin-like protein HCF164, chloroplastic (262 aa).

The transit peptide at 1-54 (MAVVASRCTGLLLPDLGASLAGFRRRRSTPASSLSFRPRRARRRLGSLSCIAPP) directs the protein to the chloroplast. The tract at residues 47 to 90 (SLSCIAPPDSAEPQTDEPAAKDDSTEDKAEASSASQDAGNPTFP) is disordered. Basic and acidic residues predominate over residues 64 to 76 (PAAKDDSTEDKAE). The segment covering 78–89 (SSASQDAGNPTF) has biased composition (polar residues). A Thioredoxin domain is found at 78–230 (SSASQDAGNP…FLDNVVALAS (153 aa)). Residues Cys151 and Cys154 each act as nucleophile in the active site. Residues Cys151 and Cys154 are joined by a disulfide bond.

The protein belongs to the thioredoxin family.

The protein resides in the plastid. It is found in the chloroplast. Functionally, probable thiol-disulfide oxidoreductase that may participate in various redox reactions in the chloroplast. The protein is Thioredoxin-like protein HCF164, chloroplastic of Oryza sativa subsp. japonica (Rice).